The sequence spans 441 residues: ATP-dependent protease ATPase subunit HslU (441 aa).

Residues Ile18, 60–65 (GVGKTE), Asp254, Glu319, and Arg391 contribute to the ATP site.

It belongs to the ClpX chaperone family. HslU subfamily. A double ring-shaped homohexamer of HslV is capped on each side by a ring-shaped HslU homohexamer. The assembly of the HslU/HslV complex is dependent on binding of ATP.

The protein localises to the cytoplasm. ATPase subunit of a proteasome-like degradation complex; this subunit has chaperone activity. The binding of ATP and its subsequent hydrolysis by HslU are essential for unfolding of protein substrates subsequently hydrolyzed by HslV. HslU recognizes the N-terminal part of its protein substrates and unfolds these before they are guided to HslV for hydrolysis. In Shewanella sediminis (strain HAW-EB3), this protein is ATP-dependent protease ATPase subunit HslU.